A 257-amino-acid polypeptide reads, in one-letter code: Indole-3-glycerol phosphate synthase (257 aa).

It belongs to the TrpC family.

It catalyses the reaction 1-(2-carboxyphenylamino)-1-deoxy-D-ribulose 5-phosphate + H(+) = (1S,2R)-1-C-(indol-3-yl)glycerol 3-phosphate + CO2 + H2O. The protein operates within amino-acid biosynthesis; L-tryptophan biosynthesis; L-tryptophan from chorismate: step 4/5. This is Indole-3-glycerol phosphate synthase from Phenylobacterium zucineum (strain HLK1).